A 219-amino-acid polypeptide reads, in one-letter code: tRNA (guanine-N(7)-)-methyltransferase (219 aa).

Positions 51, 76, 103, and 125 each coordinate S-adenosyl-L-methionine. Residue Asp-125 is part of the active site. Substrate-binding positions include Lys-129, Asp-161, and 199 to 202 (TRYE).

It belongs to the class I-like SAM-binding methyltransferase superfamily. TrmB family.

The catalysed reaction is guanosine(46) in tRNA + S-adenosyl-L-methionine = N(7)-methylguanosine(46) in tRNA + S-adenosyl-L-homocysteine. It participates in tRNA modification; N(7)-methylguanine-tRNA biosynthesis. In terms of biological role, catalyzes the formation of N(7)-methylguanine at position 46 (m7G46) in tRNA. The sequence is that of tRNA (guanine-N(7)-)-methyltransferase from Hyphomonas neptunium (strain ATCC 15444).